The primary structure comprises 113 residues: Small ribosomal subunit protein eS24 (113 aa).

This sequence belongs to the eukaryotic ribosomal protein eS24 family.

The polypeptide is Small ribosomal subunit protein eS24 (Metallosphaera sedula (strain ATCC 51363 / DSM 5348 / JCM 9185 / NBRC 15509 / TH2)).